We begin with the raw amino-acid sequence, 947 residues long: Translation initiation factor IF-2 (947 aa).

Positions 55-361 (TKDAQAGSAK…PVTERKFHEL (307 aa)) are disordered. Residues 63 to 73 (AKDKQVAEQKA) show a composition bias toward basic and acidic residues. Over residues 76–90 (AKATTPQPAAATQEA) the composition is skewed to low complexity. Basic and acidic residues-rich tracts occupy residues 103-116 (FKAE…EQAA), 125-134 (SNDRKSDYRQ), and 170-183 (NDGH…DKNR). A compositionally biased stretch (low complexity) spans 190–204 (RQQDTGRQGQTQAGA). Basic and acidic residues-rich tracts occupy residues 225–249 (ARQR…RQEA), 257–267 (QTEDKKHREAS), and 294–311 (NRPD…DGQK). The span at 316 to 334 (SWNSQNQVRNQKNSNWNNN) shows a compositional bias: low complexity. Over residues 335-345 (KKNKKGKHHKN) the composition is skewed to basic residues. The region spanning 448–617 (ERAPVVTIMG…LLVAEVEELK (170 aa)) is the tr-type G domain. The segment at 457–464 (GHVDHGKT) is G1. 457 to 464 (GHVDHGKT) lines the GTP pocket. A G2 region spans residues 482–486 (GITQH). The G3 stretch occupies residues 503-506 (DTPG). GTP is bound by residues 503–507 (DTPGH) and 557–560 (NKID). Residues 557-560 (NKID) form a G4 region. Residues 593–595 (SAK) are G5.

Belongs to the TRAFAC class translation factor GTPase superfamily. Classic translation factor GTPase family. IF-2 subfamily.

The protein resides in the cytoplasm. One of the essential components for the initiation of protein synthesis. Protects formylmethionyl-tRNA from spontaneous hydrolysis and promotes its binding to the 30S ribosomal subunits. Also involved in the hydrolysis of GTP during the formation of the 70S ribosomal complex. The polypeptide is Translation initiation factor IF-2 (Streptococcus equi subsp. zooepidemicus (strain MGCS10565)).